A 174-amino-acid chain; its full sequence is Interferon gamma (174 aa).

Positions 1 to 23 (MNSTRCILALLLCLTQAMSGCYG) are cleaved as a signal peptide. At glutamine 24 the chain carries Pyrrolidone carboxylic acid. N-linked (GlcNAc...) asparagine glycans are attached at residues asparagine 39 and asparagine 106.

It belongs to the type II (or gamma) interferon family. In terms of assembly, homodimer. Interacts with IFNGR1 (via extracellular domain); this interaction promotes IFNGR1 dimerization. As to expression, released primarily from activated T lymphocytes.

It localises to the secreted. Functionally, type II interferon produced by immune cells such as T-cells and NK cells that plays crucial roles in antimicrobial, antiviral, and antitumor responses by activating effector immune cells and enhancing antigen presentation. Primarily signals through the JAK-STAT pathway after interaction with its receptor IFNGR1 to affect gene regulation. Upon IFNG binding, IFNGR1 intracellular domain opens out to allow association of downstream signaling components JAK2, JAK1 and STAT1, leading to STAT1 activation, nuclear translocation and transcription of IFNG-regulated genes. Many of the induced genes are transcription factors such as IRF1 that are able to further drive regulation of a next wave of transcription. Plays a role in class I antigen presentation pathway by inducing a replacement of catalytic proteasome subunits with immunoproteasome subunits. In turn, increases the quantity, quality, and repertoire of peptides for class I MHC loading. Increases the efficiency of peptide generation also by inducing the expression of activator PA28 that associates with the proteasome and alters its proteolytic cleavage preference. Up-regulates as well MHC II complexes on the cell surface by promoting expression of several key molecules such as cathepsins B/CTSB, H/CTSH, and L/CTSL. Participates in the regulation of hematopoietic stem cells during development and under homeostatic conditions by affecting their development, quiescence, and differentiation. The chain is Interferon gamma (IFNG) from Phodopus sungorus (Striped hairy-footed hamster).